Consider the following 248-residue polypeptide: Pyridoxine 5'-phosphate synthase (248 aa).

Asn-7 serves as a coordination point for 3-amino-2-oxopropyl phosphate. 1-deoxy-D-xylulose 5-phosphate is bound at residue 9-10 (DH). Arg-18 lines the 3-amino-2-oxopropyl phosphate pocket. His-52 functions as the Proton acceptor in the catalytic mechanism. 1-deoxy-D-xylulose 5-phosphate-binding residues include Arg-54 and His-59. Catalysis depends on Glu-79, which acts as the Proton acceptor. Thr-109 provides a ligand contact to 1-deoxy-D-xylulose 5-phosphate. His-201 (proton donor) is an active-site residue. 3-amino-2-oxopropyl phosphate is bound by residues Gly-202 and 223–224 (GH).

This sequence belongs to the PNP synthase family. As to quaternary structure, homooctamer; tetramer of dimers.

It localises to the cytoplasm. The enzyme catalyses 3-amino-2-oxopropyl phosphate + 1-deoxy-D-xylulose 5-phosphate = pyridoxine 5'-phosphate + phosphate + 2 H2O + H(+). The protein operates within cofactor biosynthesis; pyridoxine 5'-phosphate biosynthesis; pyridoxine 5'-phosphate from D-erythrose 4-phosphate: step 5/5. Functionally, catalyzes the complicated ring closure reaction between the two acyclic compounds 1-deoxy-D-xylulose-5-phosphate (DXP) and 3-amino-2-oxopropyl phosphate (1-amino-acetone-3-phosphate or AAP) to form pyridoxine 5'-phosphate (PNP) and inorganic phosphate. The polypeptide is Pyridoxine 5'-phosphate synthase (Opitutus terrae (strain DSM 11246 / JCM 15787 / PB90-1)).